The following is a 302-amino-acid chain: Nucleotide-binding protein Rsph17025_2562 (302 aa).

15-22 (GPSGAGRT) serves as a coordination point for ATP. 62–65 (DVRN) provides a ligand contact to GTP.

The protein belongs to the RapZ-like family.

Displays ATPase and GTPase activities. The polypeptide is Nucleotide-binding protein Rsph17025_2562 (Cereibacter sphaeroides (strain ATCC 17025 / ATH 2.4.3) (Rhodobacter sphaeroides)).